Consider the following 273-residue polypeptide: Bis(5'-nucleosyl)-tetraphosphatase, symmetrical (273 aa).

It belongs to the Ap4A hydrolase family.

The enzyme catalyses P(1),P(4)-bis(5'-adenosyl) tetraphosphate + H2O = 2 ADP + 2 H(+). Hydrolyzes diadenosine 5',5'''-P1,P4-tetraphosphate to yield ADP. This chain is Bis(5'-nucleosyl)-tetraphosphatase, symmetrical, found in Aeromonas hydrophila subsp. hydrophila (strain ATCC 7966 / DSM 30187 / BCRC 13018 / CCUG 14551 / JCM 1027 / KCTC 2358 / NCIMB 9240 / NCTC 8049).